The sequence spans 206 residues: Cytochrome c oxidase assembly protein CtaG (206 aa).

Residues 1-17 lie on the Cytoplasmic side of the membrane; it reads MPEVQPSALPKPAPRLG. A helical; Signal-anchor for type II membrane protein membrane pass occupies residues 18–40; sequence RDAAVASICGFVVALMVGASFAA. The Periplasmic portion of the chain corresponds to 41–206; sequence VPFYDWFCRT…GEPDQRKGNL (166 aa).

This sequence belongs to the COX11/CtaG family.

Its subcellular location is the cell inner membrane. In terms of biological role, exerts its effect at some terminal stage of cytochrome c oxidase synthesis, probably by being involved in the insertion of the copper B into subunit I. This chain is Cytochrome c oxidase assembly protein CtaG, found in Rhodopseudomonas palustris (strain BisB5).